The following is a 222-amino-acid chain: Interleukin-12 subunit alpha (222 aa).

An N-terminal signal peptide occupies residues 1-25; it reads MCPLRSLFLMATLVFLNHLDHLSLA. 3 disulfide bridges follow: cysteine 40–cysteine 113, cysteine 67–cysteine 199, and cysteine 88–cysteine 126. N-linked (GlcNAc...) asparagine glycans are attached at residues asparagine 96 and asparagine 174.

Belongs to the IL-6 superfamily. As to quaternary structure, heterodimer with IL12B; disulfide-linked. This heterodimer is known as interleukin IL-12. Heterodimer with EBI3/IL27B; not disulfide-linked. This heterodimer is known as interleukin IL-35. Interacts with NBR1; this interaction promotes IL-12 secretion.

Its subcellular location is the secreted. In terms of biological role, heterodimerizes with IL12B to form the IL-12 cytokine or with EBI3/IL27B to form the IL-35 cytokine. IL-12 is primarily produced by professional antigen-presenting cells (APCs) such as B-cells and dendritic cells (DCs) as well as macrophages and granulocytes and regulates T-cell and natural killer-cell responses, induces the production of interferon-gamma (IFN-gamma), favors the differentiation of T-helper 1 (Th1) cells and is an important link between innate resistance and adaptive immunity. Mechanistically, exerts its biological effects through a receptor composed of IL12R1 and IL12R2 subunits. Binding to the receptor results in the rapid tyrosine phosphorylation of a number of cellular substrates including the JAK family kinases TYK2 and JAK2. In turn, recruited STAT4 gets phosphorylated and translocates to the nucleus where it regulates cytokine/growth factor responsive genes. As part of IL-35, plays essential roles in maintaining the immune homeostasis of the liver microenvironment and also functions as an immune-suppressive cytokine. Mediates biological events through unconventional receptors composed of IL12RB2 and gp130/IL6ST heterodimers or homodimers. Signaling requires the transcription factors STAT1 and STAT4, which form a unique heterodimer that binds to distinct DNA sites. The sequence is that of Interleukin-12 subunit alpha (IL12A) from Lama glama (Llama).